We begin with the raw amino-acid sequence, 563 residues long: MNTFLIDYQQIQSPAKGFSKLFVDYASEGEARQELTSNFFHYDYRHEADYYKLLGSLSSKSFAREALRDLLLRQNREYGVAEEHLQLLEKIRSPRCMTIVTGQQPGLFTGPLYTIYKALSAVVIAERQKAMFPDYDFLPIFWIESDDHDFEESACTSLFRGSTRQEIILEPWNRLPGQMVSRSPIGPSIRQCLDTLVESLHESDYREDIITKLNEFYREETTLDGGFARTMAWLFRDYPLFFLSPGDPAFKKLSVEVFFRELSTCPEASHTVIAQSSRLEEKGYSAQAKPRTVNLFYINDHNQRQKIEQVDRDFFALSPGKQRYSRHQILEMCGDHPERFSPNVILRAIVQDHVLPVFAYIGGPGEISYLAQYRRTYEHFGLKMPFIIPRGSFTLIEPVVSRIMDKVMQKSGRPSLSRKHMYQTAFHDMAALQKNAIKGGDNHDYDALFDRTAEALARELLALRPALVQLDPTLEQSLMGTSKQAEKALDTLRQKTQRANRRKHDELLGQIDKSAMHLFPGGVPQERVVNIFYYLNKYGPGLIDELAMVLRAHSTESHIALEL.

Residues 474 to 506 (LEQSLMGTSKQAEKALDTLRQKTQRANRRKHDE) are a coiled coil.

The protein belongs to the BshC family.

The protein is Putative cysteine ligase BshC of Prosthecochloris aestuarii (strain DSM 271 / SK 413).